Reading from the N-terminus, the 149-residue chain is L-alanine exporter AlaE (149 aa).

4 helical membrane-spanning segments follow: residues 16 to 36, 46 to 66, 85 to 105, and 112 to 132; these read FAMVVYCSVVNMLIEIFLSGM, LVAIPVNILIAWPYGVYRDLI, VLAYVTFQSPVYIIILLTVGA, and AAVSSNIVVSMLMGAVYGYFL.

This sequence belongs to the AlaE exporter family.

The protein resides in the cell inner membrane. Exports L-alanine. This is L-alanine exporter AlaE from Salmonella arizonae (strain ATCC BAA-731 / CDC346-86 / RSK2980).